The following is a 189-amino-acid chain: Cell division protein SepF (189 aa).

A disordered region spans residues 18 to 64; it reads EVTDHEDVAKERPVKVQKTEQTPSQQQRKPERPQETVPPRRQHIKSD. Over residues 22 to 35 the composition is skewed to basic and acidic residues; the sequence is HEDVAKERPVKVQK.

The protein belongs to the SepF family. Homodimer. Interacts with FtsZ.

Its subcellular location is the cytoplasm. Functionally, cell division protein that is part of the divisome complex and is recruited early to the Z-ring. Probably stimulates Z-ring formation, perhaps through the cross-linking of FtsZ protofilaments. Its function overlaps with FtsA. The protein is Cell division protein SepF of Streptococcus thermophilus (strain ATCC BAA-250 / LMG 18311).